A 583-amino-acid polypeptide reads, in one-letter code: Penicillin-binding protein activator LpoA (583 aa).

The signal sequence occupies residues 1 to 24 (MATILKQKLKTFFVPTAITLLLSA). Cysteine 25 carries N-palmitoyl cysteine lipidation. The S-diacylglycerol cysteine moiety is linked to residue cysteine 25.

The protein belongs to the LpoA family. Interacts with PBP1a.

It localises to the cell outer membrane. In terms of biological role, regulator of peptidoglycan synthesis that is essential for the function of penicillin-binding protein 1A (PBP1a). The chain is Penicillin-binding protein activator LpoA from Haemophilus ducreyi (strain 35000HP / ATCC 700724).